The chain runs to 395 residues: Elongation factor Tu (395 aa).

Residues 10–205 (KPHVNIGTIG…AVDSYIPMPE (196 aa)) enclose the tr-type G domain. The tract at residues 19–26 (GHIDHGKT) is G1. 19–26 (GHIDHGKT) is a binding site for GTP. T26 contacts Mg(2+). Residues 61–65 (GITIA) are G2. Residues 82–85 (DCPG) are G3. Residues 82–86 (DCPGH) and 137–140 (NKVD) contribute to the GTP site. Residues 137 to 140 (NKVD) form a G4 region. Residues 175–177 (SAL) form a G5 region.

The protein belongs to the TRAFAC class translation factor GTPase superfamily. Classic translation factor GTPase family. EF-Tu/EF-1A subfamily. In terms of assembly, monomer.

The protein resides in the cytoplasm. The catalysed reaction is GTP + H2O = GDP + phosphate + H(+). In terms of biological role, GTP hydrolase that promotes the GTP-dependent binding of aminoacyl-tRNA to the A-site of ribosomes during protein biosynthesis. The sequence is that of Elongation factor Tu from Solibacter usitatus (strain Ellin6076).